Consider the following 506-residue polypeptide: MTAQTQCQDSQVLLTMTNVCKSFPGVKALDNANLTVRSHSVHALMGENGAGKSTLLKCLFGIYAKDEGEILFLGEPVNFKTSKEALENGISMVHQELNLVRQTSVMDNLWLGRYPLKGPFVDHAKMYRDTKAIFDELDIDVDPKEKVAKLSVSQMQMIEIAKAFSYNAKIVIMDEPTSSLSEKEVEHLFKIIDKLKQRGCGIIYISHKMDEIFKICDEITILRDGKWINTVNVKESTMEQIVGMMVGRELTQRFPEKTNVPKEVILQVENLTAKNQPSIQDVSFELRKGEILGIAGLVGAKRTDIVEAIFGVRELIEGTIKLHGKTVKNHTALEAINNGFALVTEERRSTGIYSNLSIEFNSLISNMKSYLTPWKLLSTKKMKSDTQWVIDSMNVKTPSHRTTIGSLSGGNQQKVIIGRWLLTQPEILMLDEPTRGIDIGAKFEIYQLIQELAKKDKGIIMISSEMPELLGVTDRILVMSNGKLAGIVESAKTSQEEILQLAAKYL.

ABC transporter domains follow at residues 14 to 249 (LTMT…VGRE) and 260 to 506 (VPKE…AKYL). 46–53 (GENGAGKS) contacts ATP.

Belongs to the ABC transporter superfamily. Galactose/methyl galactoside importer (TC 3.A.1.2.3) family. The complex is composed of one ATP-binding protein (MglA), two transmembrane proteins (MglC) and a solute-binding protein (MglB).

The protein resides in the cell inner membrane. The catalysed reaction is D-galactose(out) + ATP + H2O = D-galactose(in) + ADP + phosphate + H(+). The enzyme catalyses methyl beta-D-galactoside(out) + ATP + H2O = methyl beta-D-galactoside(in) + ADP + phosphate + H(+). Functionally, part of the ABC transporter complex MglABC involved in galactose/methyl galactoside import. Responsible for energy coupling to the transport system. This is Galactose/methyl galactoside import ATP-binding protein MglA from Haemophilus influenzae (strain 86-028NP).